A 183-amino-acid chain; its full sequence is Adenine phosphoribosyltransferase (183 aa).

It belongs to the purine/pyrimidine phosphoribosyltransferase family. Homodimer.

The protein resides in the cytoplasm. It carries out the reaction AMP + diphosphate = 5-phospho-alpha-D-ribose 1-diphosphate + adenine. Its pathway is purine metabolism; AMP biosynthesis via salvage pathway; AMP from adenine: step 1/1. Catalyzes a salvage reaction resulting in the formation of AMP, that is energically less costly than de novo synthesis. This chain is Adenine phosphoribosyltransferase, found in Salmonella heidelberg (strain SL476).